The primary structure comprises 189 residues: Urease accessory protein UreF (189 aa).

This sequence belongs to the UreF family. UreD, UreF and UreG form a complex that acts as a GTP-hydrolysis-dependent molecular chaperone, activating the urease apoprotein by helping to assemble the nickel containing metallocenter of UreC. The UreE protein probably delivers the nickel.

The protein resides in the cytoplasm. Its function is as follows. Required for maturation of urease via the functional incorporation of the urease nickel metallocenter. This is Urease accessory protein UreF from Staphylococcus xylosus.